The sequence spans 314 residues: Small ribosomal subunit biogenesis GTPase RsgA (314 aa).

The disordered stretch occupies residues 1 to 20 (MKRAPTKQPAKPAARGGERA). Residues 85–246 (SDQFKSKLFA…LIDSPGFQEF (162 aa)) form the CP-type G domain. GTP contacts are provided by residues 134–137 (NKID) and 188–196 (GQSGMGKST). 4 residues coordinate Zn(2+): cysteine 270, cysteine 275, histidine 277, and cysteine 283.

The protein belongs to the TRAFAC class YlqF/YawG GTPase family. RsgA subfamily. In terms of assembly, monomer. Associates with 30S ribosomal subunit, binds 16S rRNA. The cofactor is Zn(2+).

The protein localises to the cytoplasm. Functionally, one of several proteins that assist in the late maturation steps of the functional core of the 30S ribosomal subunit. Helps release RbfA from mature subunits. May play a role in the assembly of ribosomal proteins into the subunit. Circularly permuted GTPase that catalyzes slow GTP hydrolysis, GTPase activity is stimulated by the 30S ribosomal subunit. The protein is Small ribosomal subunit biogenesis GTPase RsgA of Burkholderia pseudomallei (strain K96243).